The following is a 593-amino-acid chain: MLRVSAFRLLGRRGASRVSLLEDFSFRYYSSGPLGVRDDTRDSRAYFTTPIFYVNAAPHIGHLYSALLADALCRHHRLRVPSDAATGFSTGTDEHGLKIQQAAAAAGLAPSELCDRVSAQFQQLFREADISSTDFIRTTEARHRIAVQHFWGMLKSRGLLYKGLYEGWYCASDECFLPEAKVTRQPGPSGDLCPVSLESGHPVSWTKEENYIFRLSQFREPLQQWLRGDPQAITPEPFHHTVLQWLEEELPDLSVSRRSSHLHWGIPVPGDDSQTIYVWLDALVNYLTVVGYPDAEFKSWWPNTSHIIGKDILKFHAIYWPALLLGAGMSPPHRIYVHSHWTVCGQKMSKSLGNVVDPRTCLDRYTVDGFRYFLLRQGVPSWDCDYYDEKVVKLLDSELADALGGLLNRCTANKINPSGIYPAFCATCFPSEPGLVGPSGRAQAEDYALVSAVATLPKQVADHYDNFQIYKALEAVSSCVRQTNGFVQRHAPWKLNWESPVDAPWLGTVLHVALECLRVFGTLLQPVTPSLADRLLSRLGVSSTERSLGELHFLSRFYGHPSPFEGRRLGPETGVLFPRLDQSRSWLVKAHKT.

The N-terminal 29 residues, 1 to 29 (MLRVSAFRLLGRRGASRVSLLEDFSFRYY), are a transit peptide targeting the mitochondrion. The 'HIGH' region signature appears at 52–62 (FYVNAAPHIGH). Positions 347 to 351 (KMSKS) match the 'KMSKS' region motif. Lys350 contributes to the ATP binding site.

This sequence belongs to the class-I aminoacyl-tRNA synthetase family.

It is found in the mitochondrion matrix. It catalyses the reaction tRNA(Met) + L-methionine + ATP = L-methionyl-tRNA(Met) + AMP + diphosphate. This Bos taurus (Bovine) protein is Methionine--tRNA ligase, mitochondrial (MARS2).